A 111-amino-acid polypeptide reads, in one-letter code: UPF0122 protein YofM (111 aa).

The protein belongs to the UPF0122 family.

Functionally, might take part in the signal recognition particle (SRP) pathway. This is inferred from the conservation of its genetic proximity to ftsY/ffh. May be a regulatory protein. This Lactococcus lactis subsp. lactis (strain IL1403) (Streptococcus lactis) protein is UPF0122 protein YofM (yofM).